Consider the following 112-residue polypeptide: Thyroid transcription factor 1 (112 aa).

The homeobox DNA-binding region spans 1-60 (RRNRRVLFSQAQVYELERRFKQQKYLSAPEREHLASMIHLTPTQVKIWFQNHRYKMKRQA). The disordered stretch occupies residues 59-100 (QAKDKAAQQQLQQDSGGGGGGGGAGCPQQQQAQQQSPRRVAV). The span at 73–83 (SGGGGGGGGAG) shows a compositional bias: gly residues. Positions 84-93 (CPQQQQAQQQ) are enriched in low complexity.

Belongs to the NK-2 homeobox family. In terms of processing, phosphorylated on serine residues.

Its subcellular location is the nucleus. Functionally, transcription factor that binds and activates the promoter of thyroid specific genes such as thyroglobulin, thyroperoxidase, and thyrotropin receptor. Crucial in the maintenance of the thyroid differentiation phenotype. May play a role in lung development and surfactant homeostasis. This Cavia porcellus (Guinea pig) protein is Thyroid transcription factor 1 (TITF1).